A 342-amino-acid chain; its full sequence is Isopentenyl-diphosphate delta-isomerase (342 aa).

A substrate-binding site is contributed by 11 to 12 (RK). FMN is bound by residues Ser68, 69–71 (SMT), Ser99, and Asn127. 99–101 (SMR) is a substrate binding site. Residue Glu163 participates in Mg(2+) binding. FMN-binding positions include Lys194, Thr224, and 295 to 296 (AG).

This sequence belongs to the IPP isomerase type 2 family. Homooctamer. Dimer of tetramers. The cofactor is FMN. Requires NADPH as cofactor. It depends on Mg(2+) as a cofactor.

The protein localises to the cytoplasm. It carries out the reaction isopentenyl diphosphate = dimethylallyl diphosphate. Its function is as follows. Involved in the biosynthesis of isoprenoids. Catalyzes the 1,3-allylic rearrangement of the homoallylic substrate isopentenyl (IPP) to its allylic isomer, dimethylallyl diphosphate (DMAPP). This Rickettsia prowazekii (strain Madrid E) protein is Isopentenyl-diphosphate delta-isomerase.